A 268-amino-acid chain; its full sequence is Glucosamine-6-phosphate deaminase (268 aa).

The active-site Proton acceptor; for enolization step is Asp-67. The active-site For ring-opening step is Asn-137. The Proton acceptor; for ring-opening step role is filled by His-139. The active-site For ring-opening step is the Glu-144.

This sequence belongs to the glucosamine/galactosamine-6-phosphate isomerase family. NagB subfamily. Homohexamer.

The enzyme catalyses alpha-D-glucosamine 6-phosphate + H2O = beta-D-fructose 6-phosphate + NH4(+). It participates in amino-sugar metabolism; N-acetylneuraminate degradation; D-fructose 6-phosphate from N-acetylneuraminate: step 5/5. Catalyzes the reversible isomerization-deamination of glucosamine 6-phosphate (GlcN6P) to form fructose 6-phosphate (Fru6P) and ammonium ion. This is Glucosamine-6-phosphate deaminase from Colwellia psychrerythraea (strain 34H / ATCC BAA-681) (Vibrio psychroerythus).